Consider the following 1274-residue polypeptide: Polycomb protein Sfmbt (1274 aa).

A disordered region spans residues 266–285 (PSSKQMKGYRNSNSSGTSSA). A compositionally biased stretch (polar residues) spans 267–278 (SSKQMKGYRNSN). Residues 331 to 366 (PIQKDGMAVCERCGAIGVKHTFYTKSRRFCSMACAR) form an FCS-type zinc finger. Positions 340, 343, 360, and 364 each coordinate Zn(2+). Low complexity predominate over residues 381-394 (TGATTSNNQSTSSS). 2 disordered regions span residues 381–401 (TGATTSNNQSTSSSPLPAASG) and 488–510 (PGGEANGSGNDTSTPNTASSGYL). The segment covering 494 to 509 (GSGNDTSTPNTASSGY) has biased composition (polar residues). MBT repeat units lie at residues 564 to 675 (YDWL…LIPP), 683 to 781 (KDWK…LAAP), 789 to 899 (LAGR…VTPP), and 907 to 1003 (FTWE…LEGP). Disordered regions lie at residues 1007–1063 (SYQQ…TTPH) and 1083–1167 (YENN…NSSA). Residues 1019-1028 (KVPRKKKTKK) are compositionally biased toward basic residues. Residues 1038 to 1050 (AKQQNDNTQTTQT) show a composition bias toward low complexity. Residues 1087-1114 (QPEDGDGDEEDPDPDADADLDADADGDG) show a composition bias toward acidic residues. Polar residues-rich tracts occupy residues 1117–1128 (STSHISEQSTTH) and 1158–1167 (GNSNKMNSSA). Residues 1194–1258 (WNVYDVSQFL…DLITQLKCKV (65 aa)) form the SAM domain.

Interacts with pho as a component of the pho-repressive complex (PhoRC).

It localises to the nucleus. Its function is as follows. Polycomb group (PcG) protein that binds to the Polycomb response elements (PREs) found in the regulatory regions of many genes. PcG proteins act by forming multiprotein complexes, which are required to maintain the transcriptionally repressive state of homeotic genes throughout development. PcG proteins are not required to initiate repression, but to maintain it during later stages of development. They probably act via the methylation of histones, rendering chromatin heritably changed in its expressibility. Necessary but not sufficient to recruit a functional PcG repressive complex that represses target genes, suggesting that the recruitment of the distinct PRC1 complex is also required to allow a subsequent repression. This is Polycomb protein Sfmbt from Drosophila pseudoobscura pseudoobscura (Fruit fly).